Reading from the N-terminus, the 1482-residue chain is MIERGKFRSLTLVNWNGFFARTFDLDELVTTLSGGNGAGKSTTMAAFVTALIPDLTLLHFRNTTEAGATSGSRDKGLHGKLRAGVCYSTLDVLNSRHQRVVVGVRLQQVAGRDRKVDIKPFVIQGLPTAVQPTELLTQTVGERQARVLSLQELKDRVEEMEGVQFKQFNSITDYHSLMFDLGVIPKRLRSSSDRSKFYRLIEASLYGGISSAITRSLRDYLLPENSGVRKAFQDMEAALRENRMTLEAIRVTQSDRDLFKHLISEATSYVAADYMRHANERRIHLDGALALRNDLLGSRKQLAAEQYRHVEMARELAEQSGAESDLETDYQAASDHLNLVQTAMRQQEKIERYEGDLEELTYRLEEQNEVVAEASEQQAENEARAEAAELEVDELKSQLADYQQALDVQQTRAIQYQQALQALDRARTLCQLPELTAENAEHWLDTFQAREQEATEALLMLEQKLSVADAAHGQFEQAYQLVGKIAGQVSRSEAWQCARELLRDWPSQQHLAERVQPLRMRLSELEQRLRSQQDAERLLQEFCKRHGQQYQPDELDALQQELEERLESLSQGVSDAGERRMEMRQELEQIQQRIRELTTRAPIWLAAQDALSQLGEQSGEALESSQQVTEYMQQLLERERETTVERDEVAAGKRAVEAQIERLSQPGGAEDQRLVTLAERFGGVLLSEIYDDVTIDDAPYFSALYGPSRHAIVVPDLSLVREMLEGLEDCPEDLYLIEGDPQSFDDSVFAVEEQDRAVLVKTAERQWRYSRYPAVPLFGRAARENRLEILHAEREKLAERYATLSFDVQKTQRSHQAFSRFIGNHLAVAFDADPEAEIRGLNTRRGEIERALNNHEAQNQQQRQQYDQAKEGISALNRLTPLVSLLNDETLQDRVEEIREELEEAQDAARHIQQHGVSLTKLEPLLSVLQSDPQQHEQLQQDYTQAQSVQRQAKQQAFALIEVVQRRAHFSYTDSAGMQNANNDLNDKLRQRLEHAEAERTRAREQLRQYQTQFTQYSQVLASLKSSYDAKRDMLKELSQELVDIGVQADANAEARARTRRDELHAGLSTNRARRNQLEKQLTFCEAEMDSLQKKLRKLERDYYQLREQVVTAKAGWCAVMRLVKDNGVERRLHRRELAYMDGDELRSMSDKALGALRLAVSDNEHLRDVLRLSEDPKRPERKIQFYIAVYQHLRERIRQDIIRTDDPVEAIEQMEIELGRLTEELTAREQKLAISSKSVANIIRKTIQREQNRIRMLNQGLQAVSFGQVKSVRLNVNVREAHATLLDVLSEQQEQHQDLFNSNRLTFSEALAKLYQRLNPQIDMGQRTPQTIGEELLDYRNYLELEVEVFRGSDGWLRAESGALSTGEAIGTGMSILVMVVQSWEEESRRLRGKDISPCRLLFLDEAARLDAKSIATLFELCDRLEMQLIIAAPENISPEKGTTYKLVRKVFQNHEHVHVVGLRGFANEPPVLGVTAAETP.

34 to 41 (GGNGAGKS) provides a ligand contact to ATP. 6 coiled-coil regions span residues 337-468 (LNLV…LSVA), 509-604 (QHLA…APIW), 780-805 (RAARENRLEILHAEREKLAERYATLS), 835-1044 (EAEI…ELVD), 1070-1115 (TNRA…TAKA), and 1210-1265 (EAIE…LQAV). The interval 666–783 (PGGAEDQRLV…AVPLFGRAAR (118 aa)) is flexible hinge.

It belongs to the SMC family. MukB subfamily. In terms of assembly, homodimerization via its hinge domain. Binds to DNA via its C-terminal region. Interacts, and probably forms a ternary complex, with MukE and MukF via its C-terminal region. The complex formation is stimulated by calcium or magnesium. Interacts with tubulin-related protein FtsZ.

It localises to the cytoplasm. Its subcellular location is the nucleoid. Plays a central role in chromosome condensation, segregation and cell cycle progression. Functions as a homodimer, which is essential for chromosome partition. Involved in negative DNA supercoiling in vivo, and by this means organize and compact chromosomes. May achieve or facilitate chromosome segregation by condensation DNA from both sides of a centrally located replisome during cell division. In Serratia proteamaculans (strain 568), this protein is Chromosome partition protein MukB.